The sequence spans 453 residues: MLYLILFLIAPIYAGVLLPTKPSIDPFYNAPEGFKNATVGDILQFRKTPKSITGGFVPLNVQNSWQFLVRSEDSFGNPNVIVTTVIEPVNADPSKIASYQVSENAARADCAPSYALQFGSDVSTLATQAETYLLAPLLDKGYYVVSPDYEGPKSTFTVGKQSGQAVLNSIRASLKSGKITNIAEDAKVLMWGYSGGSLASGWAAALQPDYAPELSRNLLGVALGGFITNVTATVEATDDTIFAGIAANVLGGIANEYPEFKSILQNDTNKSSIFNKINNHCLTDSFIKYVGARFLTGDNKVFKSGWNIFKNLVVSKIVKDNGLVYQKQLIPTIPVFIYHGSMDQISPILNPKKTYQNWCDAGISSIEFAEDLTNGHFTESIVGAPAALTWIIDRFSNKPPVDGCQHVVRTTNYEYPNVSSSILDYFKAAMDVVAQQGLGPNIQKDQLEIKSNL.

The N-terminal stretch at 1 to 14 is a signal peptide; that stretch reads MLYLILFLIAPIYA. Asn-36 carries N-linked (GlcNAc...) asparagine glycosylation. Cysteines 110 and 281 form a disulfide. Residue Ser-194 is the Charge relay system of the active site. N-linked (GlcNAc...) asparagine glycosylation is found at Asn-229, Asn-266, and Asn-269. Catalysis depends on charge relay system residues Asp-343 and His-376. Residues Cys-359 and Cys-404 are joined by a disulfide bond. The N-linked (GlcNAc...) asparagine glycan is linked to Asn-417.

Belongs to the AB hydrolase superfamily. Lipase family. Class Lip subfamily.

The protein localises to the secreted. It carries out the reaction a triacylglycerol + H2O = a diacylglycerol + a fatty acid + H(+). Functionally, secreted lipase that is able to hydrolyze both the neutral triacylglycerols and the monopalmitate ester Tween 40, allowing the use of hydrolyzed products as carbon sources. Has broad lipolytic activity, which may be important for colonization and subsequent infection, therefore contributing to the persistence and virulence in human tissue. In Candida albicans (strain SC5314 / ATCC MYA-2876) (Yeast), this protein is Lipase 9.